Here is a 189-residue protein sequence, read N- to C-terminus: Cold-regulated 413 plasma membrane protein 3 (189 aa).

The Extracellular portion of the chain corresponds to 1 to 24 (MENIEYLNEIQAVAGKLIHSYGVP). A helical membrane pass occupies residues 25 to 45 (VMITLFLRWLASIVAVFLMIL). Topologically, residues 46-55 (DQTKWKYSNN) are cytoplasmic. The chain crosses the membrane as a helical span at residues 56–76 (IMASLLAPYLFSSLPIVIFQV). Over 77-79 (LRN) the chain is Extracellular. Residues 80-100 (GVGKWIALLTVILRLFLPNHF) form a helical membrane-spanning segment. Residues 101-104 (HESL) are Cytoplasmic-facing. The chain crosses the membrane as a helical span at residues 105–125 (EIPGATILLIVVTPSDIGAIF). The Extracellular portion of the chain corresponds to 126–168 (RDDLRYTGGDVCLLTSFYLINKHTKACGGIKNSFTQKDKVTYS). Residues 169-189 (ICLWILFVYPILSSFAALFYL) traverse the membrane as a helical segment.

This sequence belongs to the Cold-regulated 413 protein family.

Its subcellular location is the cell membrane. This is Cold-regulated 413 plasma membrane protein 3 from Arabidopsis thaliana (Mouse-ear cress).